Reading from the N-terminus, the 278-residue chain is HTH-type transcriptional activator RhaS (278 aa).

The HTH araC/xylS-type domain occupies 174–272; sequence NQLMAWLEDH…NWSPRDIRQG (99 aa). 2 DNA-binding regions (H-T-H motif) span residues 191-212 and 239-262; these read EAVAEQFSLSLRTLHRQLKQHT and VTEIAYRCGFGDSNHFSTLFRREF.

In terms of assembly, binds DNA as a dimer.

It is found in the cytoplasm. Its function is as follows. Activates expression of the rhaBAD and rhaT operons. The sequence is that of HTH-type transcriptional activator RhaS from Salmonella dublin (strain CT_02021853).